We begin with the raw amino-acid sequence, 434 residues long: Probable phosphatidylinositol 3,4,5-trisphosphate 3-phosphatase TEP1 (434 aa).

One can recognise a Phosphatase tensin-type domain in the interval 33-255 (KTKNDIGLRL…RYHEFFITHE (223 aa)). The Phosphocysteine intermediate role is filled by C193.

The catalysed reaction is a 1,2-diacyl-sn-glycero-3-phospho-(1D-myo-inositol-3,4,5-trisphosphate) + H2O = a 1,2-diacyl-sn-glycero-3-phospho-(1D-myo-inositol-4,5-bisphosphate) + phosphate. In terms of biological role, may act as a phosphoinositide 3-phosphatase by regulating PtdIns(3,4,5)P3 levels. The polypeptide is Probable phosphatidylinositol 3,4,5-trisphosphate 3-phosphatase TEP1 (TEP1) (Saccharomyces cerevisiae (strain ATCC 204508 / S288c) (Baker's yeast)).